Consider the following 593-residue polypeptide: Solute carrier family 40 member 3, chloroplastic (593 aa).

The disordered stretch occupies residues 1 to 23; that stretch reads MSMSKLLSPPPTSPPGPALSRLP. A chloroplast-targeting transit peptide spans 1–51; sequence MSMSKLLSPPPTSPPGPALSRLPCRRVAPPPVLPFPFPLRRLTSRRVFATS. A compositionally biased stretch (pro residues) spans 8-17; that stretch reads SPPPTSPPGP. 11 consecutive transmembrane segments (helical) span residues 181–201, 219–239, 253–273, 303–322, 323–343, 403–423, 431–451, 462–482, 493–513, 530–550, and 557–577; these read ILPVAVLGFFTKLVVFAAGPL, AAIQTAAHLVSVATITYAFAV, FAVLVASTAVDRLACVALGII, LLCETVGASIFALLLSKNNP, LTCIKLSCVISLCALPLLIFL, YVFVCFNVALAPGALMTTFLI, VIGAFGGSSGAVGILATFATA, AGAAGLIAQSALLGAAVVVYL, LFAFLGLIVASRAGHMAYSAI, IGATEIAVASLAELAMMAVAV, and HFGALAALSATAVTAAAGMYC.

The protein belongs to the ferroportin (FP) (TC 2.A.100) family. SLC40A subfamily.

The protein localises to the membrane. The protein resides in the plastid. It localises to the chloroplast envelope. May be involved in iron transport and iron homeostasis. The polypeptide is Solute carrier family 40 member 3, chloroplastic (Oryza sativa subsp. japonica (Rice)).